A 778-amino-acid chain; its full sequence is Lon protease (778 aa).

The Lon N-terminal domain maps to 6-207 (LPLMALRDMV…TVISTLTSNI (202 aa)). 356–363 (GPPGVGKT) lines the ATP pocket. Positions 592-773 (EDQIGSTTGL…DQVLKHALVE (182 aa)) constitute a Lon proteolytic domain. Catalysis depends on residues S679 and K722.

This sequence belongs to the peptidase S16 family. In terms of assembly, homohexamer. Organized in a ring with a central cavity.

It is found in the cytoplasm. The enzyme catalyses Hydrolysis of proteins in presence of ATP.. ATP-dependent serine protease that mediates the selective degradation of mutant and abnormal proteins as well as certain short-lived regulatory proteins. Required for cellular homeostasis and for survival from DNA damage and developmental changes induced by stress. Degrades polypeptides processively to yield small peptide fragments that are 5 to 10 amino acids long. Binds to DNA in a double-stranded, site-specific manner. This is Lon protease from Rickettsia felis (strain ATCC VR-1525 / URRWXCal2) (Rickettsia azadi).